The sequence spans 543 residues: Keratin, type II cytoskeletal 75 (543 aa).

The segment covering 1–16 (MSRQSTITFQTSSRRG) has biased composition (polar residues). The segment at 1–48 (MSRQSTITFQTSSRRGFSTASATTPATSRSRFSSASVTHSPAGSGGLG) is disordered. Residues 1–144 (MSRQSTITFQ…DPNIQRVRKE (144 aa)) are head. The segment covering 17–36 (FSTASATTPATSRSRFSSAS) has biased composition (low complexity). Residues 145 to 180 (EREQIKTLNNKFASFIDKVRFLEQQNKVLETKWSLL) are coil 1A. The IF rod domain occupies 145 to 458 (EREQIKTLNN…KLLEGEECRL (314 aa)). Residues 181–199 (QEQGTRTVRQSLEPFFEAY) form a linker 1 region. The segment at 200-292 (ITDLRRQLDS…LFEAELCQMQ (93 aa)) is coil 1B. Positions 293-315 (TRVSDTSVVLSMDNNRSLDLDSI) are linker 12. Residues 316 to 454 (IAEVKAQYEE…ATYRKLLEGE (139 aa)) are coil 2. Positions 455–543 (ECRLSGEGVS…TSSSRKSYKH (89 aa)) are tail. The disordered stretch occupies residues 511 to 543 (SSFSNSSSRGLGGSGSSFKFVSTTSSSRKSYKH). Low complexity predominate over residues 526–543 (SSFKFVSTTSSSRKSYKH).

The protein belongs to the intermediate filament family. As to quaternary structure, heterodimer of a type I and a type II keratin. May associate with KRT17.

Plays a central role in hair and nail formation. Essential component of keratin intermediate filaments in the companion layer of the hair follicle. In Bos taurus (Bovine), this protein is Keratin, type II cytoskeletal 75 (KRT75).